The primary structure comprises 429 residues: Phenylalanine--tRNA ligase, chloroplastic/mitochondrial (429 aa).

Residues 1–53 constitute a chloroplast and mitochondrion transit peptide; that stretch reads MTVFSVQSTIFSRASVALLSSNGFKRFSFVSSFSSSAAYSPPKMRKRRYPIVS. Ala-54 is modified (N-acetylalanine). Residues 163–166, Arg-185, 192–194, 199–201, Glu-269, and Phe-294 each bind substrate; these read SAHQ, THY, and QME. Residues 338-429 form the FDX-ACB domain; it reads SKYPPCYKDI…VQKKLNVELR (92 aa).

It belongs to the class-II aminoacyl-tRNA synthetase family. As to quaternary structure, monomer.

The protein localises to the plastid. It localises to the chloroplast stroma. The protein resides in the mitochondrion matrix. The catalysed reaction is tRNA(Phe) + L-phenylalanine + ATP = L-phenylalanyl-tRNA(Phe) + AMP + diphosphate + H(+). Is responsible for the charging of tRNA(Phe) with phenylalanine in mitochondrial translation. In Arabidopsis thaliana (Mouse-ear cress), this protein is Phenylalanine--tRNA ligase, chloroplastic/mitochondrial.